The primary structure comprises 430 residues: Serine--tRNA ligase (430 aa).

Over residues 45-58 the composition is skewed to polar residues; sequence ENLQAERNSRSKSI. A disordered region spans residues 45–65; that stretch reads ENLQAERNSRSKSIGQAKARG. 237–239 contributes to the L-serine binding site; sequence TSE. Residue 268 to 270 participates in ATP binding; sequence RSE. Residue E291 coordinates L-serine. Position 355–358 (355–358) interacts with ATP; that stretch reads EISS. S391 contributes to the L-serine binding site.

This sequence belongs to the class-II aminoacyl-tRNA synthetase family. Type-1 seryl-tRNA synthetase subfamily. Homodimer. The tRNA molecule binds across the dimer.

The protein resides in the cytoplasm. It carries out the reaction tRNA(Ser) + L-serine + ATP = L-seryl-tRNA(Ser) + AMP + diphosphate + H(+). The enzyme catalyses tRNA(Sec) + L-serine + ATP = L-seryl-tRNA(Sec) + AMP + diphosphate + H(+). It functions in the pathway aminoacyl-tRNA biosynthesis; selenocysteinyl-tRNA(Sec) biosynthesis; L-seryl-tRNA(Sec) from L-serine and tRNA(Sec): step 1/1. Functionally, catalyzes the attachment of serine to tRNA(Ser). Is also able to aminoacylate tRNA(Sec) with serine, to form the misacylated tRNA L-seryl-tRNA(Sec), which will be further converted into selenocysteinyl-tRNA(Sec). The polypeptide is Serine--tRNA ligase (Erwinia tasmaniensis (strain DSM 17950 / CFBP 7177 / CIP 109463 / NCPPB 4357 / Et1/99)).